The primary structure comprises 363 residues: tRNA/tmRNA (uracil-C(5))-methyltransferase (363 aa).

Positions 187, 215, 220, 236, and 296 each coordinate S-adenosyl-L-methionine. The Nucleophile role is filled by Cys-321. Residue Glu-355 is the Proton acceptor of the active site.

The protein belongs to the class I-like SAM-binding methyltransferase superfamily. RNA M5U methyltransferase family. TrmA subfamily.

It catalyses the reaction uridine(54) in tRNA + S-adenosyl-L-methionine = 5-methyluridine(54) in tRNA + S-adenosyl-L-homocysteine + H(+). The enzyme catalyses uridine(341) in tmRNA + S-adenosyl-L-methionine = 5-methyluridine(341) in tmRNA + S-adenosyl-L-homocysteine + H(+). In terms of biological role, dual-specificity methyltransferase that catalyzes the formation of 5-methyluridine at position 54 (m5U54) in all tRNAs, and that of position 341 (m5U341) in tmRNA (transfer-mRNA). The protein is tRNA/tmRNA (uracil-C(5))-methyltransferase of Pseudomonas aeruginosa (strain LESB58).